The primary structure comprises 420 residues: Transcription factor TCP4 (420 aa).

The interval 1-27 (MSDDQFHHPPPPSSMRHRSTSDAADGG) is disordered. The TCP domain maps to 45-103 (RKDRHSKVCTAKGPRDRRVRLSAHTAIQFYDVQDRLGFDRPSKAVDWLIKKAKTSIDEL). Disordered stretches follow at residues 121–176 (NAKP…PSMD), 228–256 (LSLQ…ASEP), 353–379 (HQSI…IPGI), and 399–420 (QEEE…ISRH). Residues 410 to 420 (KPSSASSISRH) are compositionally biased toward polar residues.

In terms of assembly, interacts with AHL27 and AHL29. Interacts with SPL. Interacts with JGB. Interacts with GI (via N-terminus). Expressed in cotyledons, particularly in the vascular region, in leaves, roots, buds, flowers and immature siliques.

The protein localises to the nucleus. Its function is as follows. Transcription factor playing a pivotal role in the control of morphogenesis of shoot organs by negatively regulating the expression of boundary-specific genes such as CUC genes, probably through the induction of miRNA (e.g. miR164). Required during early steps of embryogenesis. Participates in ovule development. Activates LOX2 expression by binding to the 5'-GGACCA-3' motif found in its promoter. Activates YUC5 transcription by binding to the 5'-GTGGGCCA-3' motif found in its promoter. Through the activation of YUC5 transcription, integrates the auxin response to a brassinosteroid-dependent molecular circuit that promotes cell elongation in hypocotyls. Activates GIS transcription by binding to the 5'-TGGTCC-3' motif found in its promoter. Involved in the regulation of trichome branching through the activation of GIS transcription. Activates CO transcription by binding to the 5'-GGACCAC-3' motif found in its promoter. Involved in the regulation of photoperiodic flowering through the activation of CO transcription. Activates TCL1 and TCL2 transcription by binding to the 5'-TGGCCA-3' and 5'-GTGGACCA-3' motifS found in their respective promoters. Involved in the suppression of trichome initiaition through the activation of TCL1 and TCL2 transcription. Activates HAT2 transcription by binding to the 5'-TGGTCCAC-3' motif found in its promoter. Through the activation of HAT2 transcription, involved in the auxin-independent reprogramming of mitotic cells to exit division and acquire differentiation competence within the transition zone. In Arabidopsis thaliana (Mouse-ear cress), this protein is Transcription factor TCP4 (TCP4).